Reading from the N-terminus, the 677-residue chain is Methionine--tRNA ligase (677 aa).

The short motif at 14–24 (PYANGAIHLGH) is the 'HIGH' region element. Residues Cys-145, Cys-148, Cys-158, and Cys-161 each contribute to the Zn(2+) site. The 'KMSKS' region signature appears at 330 to 334 (KMSKS). Residue Lys-333 coordinates ATP. The tRNA-binding domain maps to 576–677 (DFAKVDLRVA…EGALPGMRVM (102 aa)).

Belongs to the class-I aminoacyl-tRNA synthetase family. MetG type 1 subfamily. In terms of assembly, homodimer. The cofactor is Zn(2+).

The protein resides in the cytoplasm. It catalyses the reaction tRNA(Met) + L-methionine + ATP = L-methionyl-tRNA(Met) + AMP + diphosphate. Is required not only for elongation of protein synthesis but also for the initiation of all mRNA translation through initiator tRNA(fMet) aminoacylation. The polypeptide is Methionine--tRNA ligase (Saccharophagus degradans (strain 2-40 / ATCC 43961 / DSM 17024)).